The following is a 576-amino-acid chain: Malonate--CoA ligase ACSF3, mitochondrial (576 aa).

The transit peptide at 1–83 directs the protein to the mitochondrion; sequence MLPHVVLTFR…RSLRLSQEIC (83 aa). ATP-binding positions include 202–210, D457, R471, and K563; that span reads TSGTTGRPK.

The protein belongs to the ATP-dependent AMP-binding enzyme family.

The protein resides in the mitochondrion. It catalyses the reaction tetracosanoate + ATP + CoA = tetracosanoyl-CoA + AMP + diphosphate. The enzyme catalyses malonate + ATP + CoA = malonyl-CoA + AMP + diphosphate. Its function is as follows. Catalyzes the initial reaction in intramitochondrial fatty acid synthesis, by activating malonate and methylmalonate, but not acetate, into their respective CoA thioester. May have some preference toward very-long-chain substrates. This Homo sapiens (Human) protein is Malonate--CoA ligase ACSF3, mitochondrial.